The chain runs to 449 residues: Probable D-serine dehydratase (449 aa).

Lys-119 carries the post-translational modification N6-(pyridoxal phosphate)lysine.

Belongs to the serine/threonine dehydratase family. DsdA subfamily. Pyridoxal 5'-phosphate is required as a cofactor.

It carries out the reaction D-serine = pyruvate + NH4(+). The chain is Probable D-serine dehydratase from Pseudomonas putida (strain ATCC 700007 / DSM 6899 / JCM 31910 / BCRC 17059 / LMG 24140 / F1).